Here is a 411-residue protein sequence, read N- to C-terminus: Protrudin (411 aa).

A disordered region spans residues 1 to 27 (MQTSEREGSGPELSPSVMPEAPLESPP). The Cytoplasmic segment spans residues 1–66 (MQTSEREGSG…AGDGVRYLLR (66 aa)). The segment at 1–92 (MQTSEREGSG…LFLTLNEGAW (92 aa)) is sufficient for homooligomerization. The tract at residues 1 to 205 (MQTSEREGSG…LYLLPLCWVL (205 aa)) is sufficient for localization to endoplasmic reticulum tubular network and for interactions with REEP1, REEP5, ATL1, ATL2, ATL3 and SPAST. Positions 51 to 64 (LEPLKDAGDGVRYL) are necessary for interaction with RAB11A and function in neurite outgrowth. Residues 67–87 (WQMPLCSLLTCLGLNVLFLTL) form a helical membrane-spanning segment. Asn88 is a topological domain (lumenal). The chain crosses the membrane as a helical span at residues 89–109 (EGAWYSVGALMISVPALLGYL). Residues 110-187 (QEVCRARLPD…NPVVSSQFYG (78 aa)) lie on the Cytoplasmic side of the membrane. Positions 188-208 (ALLGTVCMLYLLPLCWVLTLL) form an intramembrane region, helical. The Cytoplasmic portion of the chain corresponds to 209–411 (NSTLFLGNVE…CASCNQTLSK (203 aa)). The interval 234-286 (MNPKQEEHAFESPPPPDVGGKDGLMDSTPALTPTEDLTPGSVEEAEEAEPDEE) is disordered. Positions 271–361 (TPGSVEEAEE…GCSATFSVLK (91 aa)) are necessary for interaction with KIF5A. Residues 276–286 (EEAEEAEPDEE) show a composition bias toward acidic residues. A necessary for interaction with VAPA and function in cell projections formation region spans residues 286–292 (EFKDAIE). An FYVE-type zinc finger spans residues 344–410 (TNNFGNCTGC…VCASCNQTLS (67 aa)). Cys350, Cys353, Cys366, Cys369, Cys374, Cys377, Cys402, and Cys405 together coordinate Zn(2+).

Can form homooligomers (monomers, dimers and tetramers). Interacts with RAB11A (GDP-bound form); regulates RAB11A. Interacts with FKBP8; may negatively regulate ZFYVE27 phosphorylation. Interacts with VAPA (via MSP domain); may regulate ZFYVE27 retention in the endoplasmic reticulum and its function in cell projections formation. Interacts with VAPB (via MSP domain). Interacts with REEP1, REEP5 and ATL1. Interacts with ATL2, ATL3 and SPAST. Interacts with KIF5A and RTN3. Interacts with RAB11B (GDP-bound form), SURF4, KIF5B and KIF5C. Post-translationally, phosphorylated. Phosphorylation is induced by NGF through the MAPK/ERK pathway and modulates interaction with RAB11A.

It localises to the recycling endosome membrane. The protein resides in the endoplasmic reticulum membrane. The protein localises to the cell projection. It is found in the growth cone membrane. In terms of biological role, key regulator of RAB11-dependent vesicular trafficking during neurite extension through polarized membrane transport. Promotes axonal elongation and contributes to the establishment of neuronal cell polarity. Involved in nerve growth factor-induced neurite formation in VAPA-dependent manner. Contributes to both the formation and stabilization of the tubular ER network. Involved in ER morphogenesis by regulating the sheet-to-tubule balance and possibly the density of tubule interconnections. Acts as an adapter protein and facilitates the interaction of KIF5A with VAPA, VAPB, SURF4, RAB11A, RAB11B and RTN3 and the ZFYVE27-KIF5A complex contributes to the transport of these proteins in neurons. Can induce formation of neurite-like membrane protrusions in non-neuronal cells in a KIF5A/B-dependent manner. The sequence is that of Protrudin (ZFYVE27) from Homo sapiens (Human).